A 437-amino-acid polypeptide reads, in one-letter code: Trigger factor (437 aa).

In terms of domain architecture, PPIase FKBP-type spans 163–248; it reads GDRVIIDFEG…LNNVSEATLP (86 aa).

Belongs to the FKBP-type PPIase family. Tig subfamily.

It localises to the cytoplasm. It catalyses the reaction [protein]-peptidylproline (omega=180) = [protein]-peptidylproline (omega=0). In terms of biological role, involved in protein export. Acts as a chaperone by maintaining the newly synthesized protein in an open conformation. Functions as a peptidyl-prolyl cis-trans isomerase. The polypeptide is Trigger factor (tig) (Neisseria meningitidis serogroup B (strain ATCC BAA-335 / MC58)).